The chain runs to 319 residues: Ribonucleoside-diphosphate reductase 2 subunit beta (319 aa).

Positions 67, 98, and 101 each coordinate Fe cation. Tyrosine 105 is an active-site residue. Residues glutamate 158, glutamate 192, and histidine 195 each contribute to the Fe cation site.

It belongs to the ribonucleoside diphosphate reductase small chain family. In terms of assembly, tetramer of two alpha and two beta subunits. Fe cation serves as cofactor.

It carries out the reaction a 2'-deoxyribonucleoside 5'-diphosphate + [thioredoxin]-disulfide + H2O = a ribonucleoside 5'-diphosphate + [thioredoxin]-dithiol. Its function is as follows. Provides the precursors necessary for DNA synthesis. Catalyzes the biosynthesis of deoxyribonucleotides from the corresponding ribonucleotides. R2F contains the tyrosyl radical required for catalysis. The protein is Ribonucleoside-diphosphate reductase 2 subunit beta (nrdF) of Salmonella typhimurium (strain LT2 / SGSC1412 / ATCC 700720).